Reading from the N-terminus, the 171-residue chain is Ribosome maturation factor RimP (171 aa).

Belongs to the RimP family.

It localises to the cytoplasm. Required for maturation of 30S ribosomal subunits. The chain is Ribosome maturation factor RimP from Anaeromyxobacter sp. (strain K).